Consider the following 147-residue polypeptide: Large ribosomal subunit protein uL13 (147 aa).

The protein belongs to the universal ribosomal protein uL13 family. As to quaternary structure, part of the 50S ribosomal subunit.

In terms of biological role, this protein is one of the early assembly proteins of the 50S ribosomal subunit, although it is not seen to bind rRNA by itself. It is important during the early stages of 50S assembly. The polypeptide is Large ribosomal subunit protein uL13 (Mycobacterium marinum (strain ATCC BAA-535 / M)).